The sequence spans 375 residues: Protein RecA (375 aa).

A disordered region spans residues 1 to 20 (MPAEMKSAASGSDPRSSGER). 79–86 (GPESSGKT) provides a ligand contact to ATP.

This sequence belongs to the RecA family.

The protein localises to the cytoplasm. Functionally, can catalyze the hydrolysis of ATP in the presence of single-stranded DNA, the ATP-dependent uptake of single-stranded DNA by duplex DNA, and the ATP-dependent hybridization of homologous single-stranded DNAs. It interacts with LexA causing its activation and leading to its autocatalytic cleavage. The chain is Protein RecA from Parasynechococcus marenigrum (strain WH8102).